Consider the following 158-residue polypeptide: Large ribosomal subunit protein uL15 (158 aa).

The span at 1–13 shows a compositional bias: basic and acidic residues; that stretch reads MKLNEIKDNEGST. Positions 1-44 are disordered; sequence MKLNEIKDNEGSTHSRKRLGRGIGSGSGKTAGRGVKGQKSRSGV. A compositionally biased stretch (gly residues) spans 21 to 35; the sequence is RGIGSGSGKTAGRGV.

This sequence belongs to the universal ribosomal protein uL15 family. Part of the 50S ribosomal subunit.

Functionally, binds to the 23S rRNA. The sequence is that of Large ribosomal subunit protein uL15 from Rhizobium etli (strain ATCC 51251 / DSM 11541 / JCM 21823 / NBRC 15573 / CFN 42).